We begin with the raw amino-acid sequence, 150 residues long: Deoxyuridine 5'-triphosphate nucleotidohydrolase (150 aa).

Substrate-binding positions include 69–71 (RSG), Asn-82, 86–88 (TID), and Lys-96.

This sequence belongs to the dUTPase family. It depends on Mg(2+) as a cofactor.

The enzyme catalyses dUTP + H2O = dUMP + diphosphate + H(+). Its pathway is pyrimidine metabolism; dUMP biosynthesis; dUMP from dCTP (dUTP route): step 2/2. Functionally, this enzyme is involved in nucleotide metabolism: it produces dUMP, the immediate precursor of thymidine nucleotides and it decreases the intracellular concentration of dUTP so that uracil cannot be incorporated into DNA. This Aquifex aeolicus (strain VF5) protein is Deoxyuridine 5'-triphosphate nucleotidohydrolase.